A 353-amino-acid chain; its full sequence is Probable dual-specificity RNA methyltransferase RlmN (353 aa).

Residue Glu-90 is the Proton acceptor of the active site. The Radical SAM core domain occupies 96–326; sequence YKHGNSICIS…VTTRREMGSD (231 aa). Cysteines 103 and 331 form a disulfide. [4Fe-4S] cluster contacts are provided by Cys-110, Cys-114, and Cys-117. S-adenosyl-L-methionine contacts are provided by residues 157–158, Ser-189, 212–214, and Asn-288; these read GE and SLH. The active-site S-methylcysteine intermediate is the Cys-331.

The protein belongs to the radical SAM superfamily. RlmN family. It depends on [4Fe-4S] cluster as a cofactor.

The protein resides in the cytoplasm. It catalyses the reaction adenosine(2503) in 23S rRNA + 2 reduced [2Fe-2S]-[ferredoxin] + 2 S-adenosyl-L-methionine = 2-methyladenosine(2503) in 23S rRNA + 5'-deoxyadenosine + L-methionine + 2 oxidized [2Fe-2S]-[ferredoxin] + S-adenosyl-L-homocysteine. The catalysed reaction is adenosine(37) in tRNA + 2 reduced [2Fe-2S]-[ferredoxin] + 2 S-adenosyl-L-methionine = 2-methyladenosine(37) in tRNA + 5'-deoxyadenosine + L-methionine + 2 oxidized [2Fe-2S]-[ferredoxin] + S-adenosyl-L-homocysteine. Its function is as follows. Specifically methylates position 2 of adenine 2503 in 23S rRNA and position 2 of adenine 37 in tRNAs. The protein is Probable dual-specificity RNA methyltransferase RlmN of Clostridium beijerinckii (strain ATCC 51743 / NCIMB 8052) (Clostridium acetobutylicum).